Reading from the N-terminus, the 236-residue chain is 2,3,4,5-tetrahydropyridine-2,6-dicarboxylate N-acetyltransferase (236 aa).

It belongs to the transferase hexapeptide repeat family. DapH subfamily.

The enzyme catalyses (S)-2,3,4,5-tetrahydrodipicolinate + acetyl-CoA + H2O = L-2-acetamido-6-oxoheptanedioate + CoA. Its pathway is amino-acid biosynthesis; L-lysine biosynthesis via DAP pathway; LL-2,6-diaminopimelate from (S)-tetrahydrodipicolinate (acetylase route): step 1/3. Its function is as follows. Catalyzes the transfer of an acetyl group from acetyl-CoA to tetrahydrodipicolinate. The sequence is that of 2,3,4,5-tetrahydropyridine-2,6-dicarboxylate N-acetyltransferase from Clostridium botulinum (strain Kyoto / Type A2).